A 462-amino-acid polypeptide reads, in one-letter code: UDP-N-acetylmuramate--L-alanine ligase (462 aa).

An ATP-binding site is contributed by 117-123; it reads GTHGKTT.

It belongs to the MurCDEF family.

The protein localises to the cytoplasm. It carries out the reaction UDP-N-acetyl-alpha-D-muramate + L-alanine + ATP = UDP-N-acetyl-alpha-D-muramoyl-L-alanine + ADP + phosphate + H(+). Its pathway is cell wall biogenesis; peptidoglycan biosynthesis. Functionally, cell wall formation. The chain is UDP-N-acetylmuramate--L-alanine ligase from Streptomyces coelicolor (strain ATCC BAA-471 / A3(2) / M145).